The sequence spans 338 residues: Anthranilate phosphoribosyltransferase (338 aa).

5-phospho-alpha-D-ribose 1-diphosphate contacts are provided by residues G82, 85-86 (GD), T90, 92-95 (NIST), 110-118 (KHGNRAASS), and S122. G82 lines the anthranilate pocket. Residue S94 participates in Mg(2+) binding. N113 contributes to the anthranilate binding site. Position 168 (R168) interacts with anthranilate. Mg(2+)-binding residues include D226 and E227.

The protein belongs to the anthranilate phosphoribosyltransferase family. Homodimer. Requires Mg(2+) as cofactor.

It carries out the reaction N-(5-phospho-beta-D-ribosyl)anthranilate + diphosphate = 5-phospho-alpha-D-ribose 1-diphosphate + anthranilate. It functions in the pathway amino-acid biosynthesis; L-tryptophan biosynthesis; L-tryptophan from chorismate: step 2/5. Functionally, catalyzes the transfer of the phosphoribosyl group of 5-phosphorylribose-1-pyrophosphate (PRPP) to anthranilate to yield N-(5'-phosphoribosyl)-anthranilate (PRA). This is Anthranilate phosphoribosyltransferase from Deinococcus radiodurans (strain ATCC 13939 / DSM 20539 / JCM 16871 / CCUG 27074 / LMG 4051 / NBRC 15346 / NCIMB 9279 / VKM B-1422 / R1).